A 360-amino-acid chain; its full sequence is Protein OSB4, chloroplastic (360 aa).

A chloroplast-targeting transit peptide spans 1-61 (MQFLGRSISK…AEKSSEEWPR (61 aa)). Residues 28-64 (SQQFLSTSSTESSSRTRGGGGGNRAEKSSEEWPRPME) form a disordered region. Over residues 33-43 (STSSTESSSRT) the composition is skewed to low complexity. Residues 51–61 (RAEKSSEEWPR) show a composition bias toward basic and acidic residues. In terms of domain architecture, SSB spans 71-188 (IANSIDLIGY…VMVRDLHYIE (118 aa)). PDF region regions lie at residues 224–276 (WFDL…SELK) and 296–344 (WKDL…EKLP).

Its subcellular location is the plastid. The protein resides in the chloroplast. Its function is as follows. Binds single-stranded DNA. The protein is Protein OSB4, chloroplastic (OSB4) of Arabidopsis thaliana (Mouse-ear cress).